The chain runs to 2214 residues: Multifunctional protein URA2 (2214 aa).

A2 carries the N-acetylalanine modification. Positions 2 to 400 are GATase (Glutamine amidotransferase); that stretch reads ATIAPTAPIT…PGPRDTEFLF (399 aa). L-glutamine is bound by residues S64, G273, and G275. Positions 228-413 constitute a Glutamine amidotransferase type-1 domain; that stretch reads RILAIDVGMK…IQAVKEFKYT (186 aa). The active-site Nucleophile; for GATase activity is the C302. L-glutamine contacts are provided by L303, Q306, N344, G346, and F347. Residues H386 and E388 each act as for GATase activity in the active site. Positions 401–440 are linker; it reads DVFIQAVKEFKYTQVLKPIAFPGGLLEDNVKAHPRIEAKK. Residues 440 to 980 form a CPSase A region; sequence KVLVLGSGGL…DSHDLSFDDH (541 aa). A CPSase (Carbamoyl phosphate synthase) region spans residues 440–1482; the sequence is KVLVLGSGGL…TNVKCAKLLI (1043 aa). Residues R558, R598, G604, G605, K635, M637, E642, G668, I669, H670, Q711, and E725 each coordinate ATP. 2 ATP-grasp domains span residues 562 to 754 and 1099 to 1290; these read SNAI…KLGL and SRML…KAIM. Residues Q711, E725, and N727 each coordinate Mg(2+). The Mn(2+) site is built by Q711, E725, and N727. Positions 981 to 1482 are CPSase B; that stretch reads GVMVLGSGVY…TNVKCAKLLI (502 aa). 10 residues coordinate ATP: R1135, K1174, I1176, E1181, G1206, V1207, H1208, S1209, Q1249, and E1261. Mg(2+)-binding residues include Q1249, E1261, and N1263. Q1249, E1261, and N1263 together coordinate Mn(2+). In terms of domain architecture, MGS-like spans 1356–1508; sequence FKLPKKNILL…QTSHRTITLP (153 aa). Positions 1483–1492 are linker; the sequence is EAISRNITLD. The tract at residues 1493 to 1821 is defective DHOase domain; the sequence is VSERDAQTSH…YNGETLVLSG (329 aa). Residues 1822–1909 form a linker region; sequence ELVSPGAKGK…NLIRSNNPFR (88 aa). A Glycyl lysine isopeptide (Lys-Gly) (interchain with G-Cter in ubiquitin) cross-link involves residue K1853. S1857 bears the Phosphoserine; by PKA mark. The interval 1910–2214 is ATCase (Aspartate transcarbamylase); that stretch reads GRHILSIKQF…LLAMVMGVDM (305 aa). The carbamoyl phosphate site is built by R1962 and T1963. Residue K1990 coordinates L-aspartate. Residues R2011, H2039, and Q2042 each coordinate carbamoyl phosphate. L-aspartate is bound by residues R2072 and R2134. Residues L2173 and P2174 each coordinate carbamoyl phosphate.

This sequence in the N-terminal section; belongs to the CarA family. It in the 2nd section; belongs to the CarB family. In the 3rd section; belongs to the metallo-dependent hydrolases superfamily. DHOase family. CAD subfamily. The protein in the C-terminal section; belongs to the aspartate/ornithine carbamoyltransferase superfamily. ATCase family. It depends on Mg(2+) as a cofactor. Requires Mn(2+) as cofactor.

Its subcellular location is the cytoplasm. It carries out the reaction hydrogencarbonate + L-glutamine + 2 ATP + H2O = carbamoyl phosphate + L-glutamate + 2 ADP + phosphate + 2 H(+). The catalysed reaction is L-glutamine + H2O = L-glutamate + NH4(+). The enzyme catalyses hydrogencarbonate + NH4(+) + 2 ATP = carbamoyl phosphate + 2 ADP + phosphate + 2 H(+). It catalyses the reaction carbamoyl phosphate + L-aspartate = N-carbamoyl-L-aspartate + phosphate + H(+). It functions in the pathway pyrimidine metabolism; UMP biosynthesis via de novo pathway; (S)-dihydroorotate from bicarbonate: step 1/3. Its pathway is pyrimidine metabolism; UMP biosynthesis via de novo pathway; (S)-dihydroorotate from bicarbonate: step 2/3. Its activity is regulated as follows. Both CPSase and ATCase activities are feedback inhibited by the end product UTP. Functionally, multifunctional protein that encodes the first 2 enzymatic activities of the de novo pyrimidine pathway: carbamoylphosphate synthetase (CPSase; EC 6.3.5.5) and aspartate transcarbamylase (ATCase; EC 2.1.3.2). The CPSase-function is accomplished in 2 steps, by a glutamine-dependent amidotransferase activity (GATase) that binds and cleaves glutamine to produce ammonia, followed by an ammonium-dependent carbamoyl phosphate synthetase, which reacts with the ammonia, hydrogencarbonate and ATP to form carbamoyl phosphate. The endogenously produced carbamoyl phosphate is sequestered and channeled to the ATCase active site. ATCase then catalyzes the formation of carbamoyl-L-aspartate from L-aspartate and carbamoyl phosphate. This chain is Multifunctional protein URA2 (URA2), found in Saccharomyces cerevisiae (strain ATCC 204508 / S288c) (Baker's yeast).